We begin with the raw amino-acid sequence, 194 residues long: Large ribosomal subunit protein bL9 (194 aa).

This sequence belongs to the bacterial ribosomal protein bL9 family.

Functionally, binds to the 23S rRNA. This Paracoccus denitrificans (strain Pd 1222) protein is Large ribosomal subunit protein bL9.